Here is a 473-residue protein sequence, read N- to C-terminus: Cysteine--tRNA ligase (473 aa).

C27 contacts Zn(2+). A 'HIGH' region motif is present at residues 29-39; it reads ITPYDHMHVGH. Positions 213, 238, and 242 each coordinate Zn(2+). The short motif at 271 to 275 is the 'KMSKS' region element; that stretch reads KMSKS. K274 lines the ATP pocket.

This sequence belongs to the class-I aminoacyl-tRNA synthetase family. The cofactor is Zn(2+).

It localises to the cytoplasm. It catalyses the reaction tRNA(Cys) + L-cysteine + ATP = L-cysteinyl-tRNA(Cys) + AMP + diphosphate. In Pyrobaculum islandicum (strain DSM 4184 / JCM 9189 / GEO3), this protein is Cysteine--tRNA ligase.